Here is a 233-residue protein sequence, read N- to C-terminus: Orotidine 5'-phosphate decarboxylase (233 aa).

Residues Asp-13, Lys-35, 62–71 (DLKFHDIPNT), Thr-122, Arg-182, Gln-191, Gly-211, and Arg-212 each bind substrate. Lys-64 functions as the Proton donor in the catalytic mechanism.

This sequence belongs to the OMP decarboxylase family. Type 1 subfamily. In terms of assembly, homodimer.

It catalyses the reaction orotidine 5'-phosphate + H(+) = UMP + CO2. It functions in the pathway pyrimidine metabolism; UMP biosynthesis via de novo pathway; UMP from orotate: step 2/2. Its function is as follows. Catalyzes the decarboxylation of orotidine 5'-monophosphate (OMP) to uridine 5'-monophosphate (UMP). This Pseudomonas putida (strain GB-1) protein is Orotidine 5'-phosphate decarboxylase.